The following is a 386-amino-acid chain: uncharacterized protein (386 aa).

The protein belongs to the TelA family.

This is an uncharacterized protein from Bacillus subtilis (strain 168).